We begin with the raw amino-acid sequence, 92 residues long: Small ribosomal subunit protein bS6 (92 aa).

The protein belongs to the bacterial ribosomal protein bS6 family.

Functionally, binds together with bS18 to 16S ribosomal RNA. The sequence is that of Small ribosomal subunit protein bS6 from Clostridioides difficile (strain 630) (Peptoclostridium difficile).